The primary structure comprises 313 residues: Trimeric intracellular cation channel type 1B.2 (313 aa).

Residues 1 to 28 (MGWVPDEWSIDHDTLIDAGGYVQKLKLY) lie on the Lumenal side of the membrane. A helical transmembrane segment spans residues 29-48 (PYFDAAHYVLTCLSVRHDLG). Residues 49 to 57 (PDAISFSRK) lie on the Cytoplasmic side of the membrane. Residues 58–82 (HPFSCWLSCMLMSFAGSFLSCFLLG) form a discontinuously helical membrane-spanning segment. The Lumenal segment spans residues 83 to 90 (EPIISPLK). Residues 91-108 (QHADILLGSIVWYLVFYS) form a helical membrane-spanning segment. Over 109 to 118 (PFDVVFRLAT) the chain is Cytoplasmic. The chain crosses the membrane as a helical span at residues 119-149 (WFPVKLGLSVLKEVQRTHKIAAGVKHAVRIY). 2 residues coordinate a 1,2-diacyl-sn-glycero-3-phospho-(1D-myo-inositol-4,5-bisphosphate): Lys-130 and Arg-134. The Lumenal portion of the chain corresponds to 150–151 (PE). The chain crosses the membrane as a discontinuously helical span at residues 152-178 (SYLVQILVGVAKGAGSGVVKIVEQLAR). Gly-168 contributes to the a 1,2-diacyl-sn-glycero-3-phospho-(1D-myo-inositol-4,5-bisphosphate) binding site. The Cytoplasmic portion of the chain corresponds to 179-192 (GTWHPTNHEILRPS). Residues 193 to 210 (FTTKACVIASIVFTLERH) traverse the membrane as a helical segment. Residues 211–216 (SMYVTA) are Lumenal-facing. Residues 217-239 (PHDLVYLCVVGFFIYFKLASLCL) form a helical membrane-spanning segment. Residues 240-313 (SVHDVLMPIE…MSNGTDKKNN (74 aa)) are Cytoplasmic-facing.

This sequence belongs to the TMEM38 family. In terms of assembly, homotrimer; trimerization probably requires binding to phosphatidylinositol 4,5-bisphosphate (PIP2).

It localises to the endoplasmic reticulum membrane. Potassium channel that mediates transmembrane potassium transport. Might be required for maintenance of rapid intracellular calcium release. May act as a potassium counter-ion channel that functions in synchronization with calcium release from intracellular stores. Binds phosphatidylinositol 4,5-bisphosphate (PIP2). This is Trimeric intracellular cation channel type 1B.2 from Caenorhabditis elegans.